Reading from the N-terminus, the 94-residue chain is MVLLAGTRPQGGEARCMIPPPPSPLLGAQVEEDRTEFKEFQDFSSLPDTRSVASDDSLYPFQDEEEHGVEGVESVPEEGILEAWGSCGRWCGVG.

A disordered region spans residues 1–23 (MVLLAGTRPQGGEARCMIPPPPS).

This is an uncharacterized protein from Homo sapiens (Human).